Consider the following 307-residue polypeptide: Glutaminase 1 (307 aa).

Residues S62, N114, E159, N166, Y190, Y242, and V260 each contribute to the substrate site.

The protein belongs to the glutaminase family. As to quaternary structure, homotetramer.

The catalysed reaction is L-glutamine + H2O = L-glutamate + NH4(+). The protein is Glutaminase 1 of Clostridium perfringens (strain 13 / Type A).